Reading from the N-terminus, the 378-residue chain is Enoyl-[acyl-carrier-protein] reductase 1, mitochondrial (378 aa).

Tyr59 (proton donor) is an active-site residue. Residues Asn151, 180–183 (NSQV), 203–206 (RDGK), 284–287 (YGGM), 309–311 (YWL), and Lys372 each bind NADP(+).

This sequence belongs to the zinc-containing alcohol dehydrogenase family. Quinone oxidoreductase subfamily. Homodimer.

It localises to the mitochondrion matrix. It catalyses the reaction a 2,3-saturated acyl-[ACP] + NADP(+) = a (2E)-enoyl-[ACP] + NADPH + H(+). In terms of biological role, catalyzes the NADPH-dependent reduction of trans-2-enoyl thioesters in mitochondrial fatty acid synthesis (fatty acid synthesis type II). Fatty acid chain elongation in mitochondria uses acyl carrier protein (ACP) as an acyl group carrier, but the enzyme accepts both ACP and CoA thioesters as substrates in vitro. Required for respiration and the maintenance of the mitochondrial compartment. In Debaryomyces hansenii (strain ATCC 36239 / CBS 767 / BCRC 21394 / JCM 1990 / NBRC 0083 / IGC 2968) (Yeast), this protein is Enoyl-[acyl-carrier-protein] reductase 1, mitochondrial (ETR1).